A 313-amino-acid chain; its full sequence is MTHVPVLYTQAMEGLRVVENGTYLDGTFGRGGHARGVLQLLGPGGRLLVMDKDPEAIAMAERAFSCDPRVVIRHGSFALLAQLAAPQSLDGVLFDLGVSSPQLDVPERGFSFVKDGPLDMRMDPEMGESAAQWLARVSEREIADVLWTYGEEKQSRRIARAIVAYRANQPLLRTVQLAELIASVMLRTKSGACKSRIHPATRSFQGIRIHVNRELVDLEVGLEAALAALRPGGRLVVISFHSLEDRIVKQFISRHAKVPPTNRRLPEVQTFVPLLRMIGRAIKADEDELEVNPRARSAVLRVAEKLDVLEAVR.

S-adenosyl-L-methionine contacts are provided by residues 31 to 33, D51, F77, D95, and Q102; that span reads GGH.

Belongs to the methyltransferase superfamily. RsmH family.

The protein resides in the cytoplasm. It carries out the reaction cytidine(1402) in 16S rRNA + S-adenosyl-L-methionine = N(4)-methylcytidine(1402) in 16S rRNA + S-adenosyl-L-homocysteine + H(+). Functionally, specifically methylates the N4 position of cytidine in position 1402 (C1402) of 16S rRNA. The chain is Ribosomal RNA small subunit methyltransferase H from Xylella fastidiosa (strain 9a5c).